Reading from the N-terminus, the 327-residue chain is PDZ and LIM domain protein 1 (327 aa).

T2 is modified (N-acetylthreonine). The PDZ domain occupies 3 to 85 (TQQIVLQGPG…NMTLTVSRSE (83 aa)). Residues S90 and S130 each carry the phosphoserine modification. Y142 is subject to Phosphotyrosine. The disordered stretch occupies residues 161 to 186 (VESKTSASGEEANSRPSAQPHPSGGL). Residues 256–315 (PICDKCGTGIVGVFVKLRDHHRHPECYVCTDCGINLKQKGHFFVGDQIYCEKHARERVTP) enclose the LIM zinc-binding domain. Zn(2+) is bound by residues C258, C261, H278, C281, C284, C287, C305, and H308. At T314 the chain carries Phosphothreonine. Position 319 is a phosphotyrosine (Y319).

In terms of assembly, interacts with ACTN1. Interacts with ACTN2 and ACTN4. Interacts with PDLIM4. In terms of tissue distribution, expressed most abundantly in heart, lung and liver, moderately in spleen and skeletal muscle, and at extremely low levels (if at all) in testis and brain tissues.

The protein localises to the cytoplasm. The protein resides in the cytoskeleton. Its subcellular location is the myofibril. It localises to the sarcomere. It is found in the z line. Its function is as follows. Cytoskeletal protein that may act as an adapter that brings other proteins (like kinases) to the cytoskeleton. Involved in assembly, disassembly and directioning of stress fibers in fibroblasts. Required for the localization of ACTN1 and PALLD to stress fibers. Required for cell migration and in maintaining cell polarity of fibroblasts. The polypeptide is PDZ and LIM domain protein 1 (Pdlim1) (Rattus norvegicus (Rat)).